Consider the following 458-residue polypeptide: Elongation factor 1-alpha 1 (458 aa).

Glycine 2 bears the N,N,N-trimethylglycine mark. Lysine 3 is subject to N6,N6-dimethyllysine; alternate. Lysine 3 bears the N6-methyllysine; alternate mark. Positions 5-240 (KTHVNVVVIG…DAIEPPTRPT (236 aa)) constitute a tr-type G domain. The segment at 14–21 (GHVDSGKS) is G1. 14–21 (GHVDSGKS) is a binding site for GTP. The residue at position 30 (lysine 30) is an N6-methyllysine. Positions 70–74 (GITID) are G2. N6,N6,N6-trimethyllysine is present on lysine 79. The segment at 91 to 94 (DAPG) is G3. GTP contacts are provided by residues 91–95 (DAPGH) and 153–156 (NKMD). Positions 153–156 (NKMD) are G4. Residues 192–194 (SGW) are G5. Lysine 316 is subject to N6,N6-dimethyllysine; alternate. The residue at position 316 (lysine 316) is an N6-methyllysine; alternate. Lysine 390 bears the N6-methyllysine mark.

The protein belongs to the TRAFAC class translation factor GTPase superfamily. Classic translation factor GTPase family. EF-Tu/EF-1A subfamily.

It localises to the cytoplasm. Its function is as follows. This protein promotes the GTP-dependent binding of aminoacyl-tRNA to the A-site of ribosomes during protein biosynthesis. This Candida albicans (strain SC5314 / ATCC MYA-2876) (Yeast) protein is Elongation factor 1-alpha 1 (TEF1).